The chain runs to 472 residues: Siroheme synthase 2 (472 aa).

The tract at residues 1–204 is precorrin-2 dehydrogenase /sirohydrochlorin ferrochelatase; sequence MDYFPIFCQL…EDQVQVEQHV (204 aa). NAD(+)-binding positions include 22-23 and 43-44; these read EV and CE. At Ser-128 the chain carries Phosphoserine. Positions 216 to 472 are uroporphyrinogen-III C-methyltransferase; the sequence is GEVVLVGAGP…GMKEQVERVG (257 aa). Residue Pro-225 coordinates S-adenosyl-L-methionine. The active-site Proton acceptor is the Asp-248. Lys-270 serves as the catalytic Proton donor. Residues 301 to 303, Ile-306, 331 to 332, Met-382, and Gly-411 each bind S-adenosyl-L-methionine; these read GGD and TA.

In the N-terminal section; belongs to the precorrin-2 dehydrogenase / sirohydrochlorin ferrochelatase family. It in the C-terminal section; belongs to the precorrin methyltransferase family.

It carries out the reaction uroporphyrinogen III + 2 S-adenosyl-L-methionine = precorrin-2 + 2 S-adenosyl-L-homocysteine + H(+). The enzyme catalyses precorrin-2 + NAD(+) = sirohydrochlorin + NADH + 2 H(+). It catalyses the reaction siroheme + 2 H(+) = sirohydrochlorin + Fe(2+). It participates in cofactor biosynthesis; adenosylcobalamin biosynthesis; precorrin-2 from uroporphyrinogen III: step 1/1. The protein operates within cofactor biosynthesis; adenosylcobalamin biosynthesis; sirohydrochlorin from precorrin-2: step 1/1. Its pathway is porphyrin-containing compound metabolism; siroheme biosynthesis; precorrin-2 from uroporphyrinogen III: step 1/1. It functions in the pathway porphyrin-containing compound metabolism; siroheme biosynthesis; siroheme from sirohydrochlorin: step 1/1. It participates in porphyrin-containing compound metabolism; siroheme biosynthesis; sirohydrochlorin from precorrin-2: step 1/1. Functionally, multifunctional enzyme that catalyzes the SAM-dependent methylations of uroporphyrinogen III at position C-2 and C-7 to form precorrin-2 via precorrin-1. Then it catalyzes the NAD-dependent ring dehydrogenation of precorrin-2 to yield sirohydrochlorin. Finally, it catalyzes the ferrochelation of sirohydrochlorin to yield siroheme. The sequence is that of Siroheme synthase 2 from Yersinia enterocolitica serotype O:8 / biotype 1B (strain NCTC 13174 / 8081).